Consider the following 142-residue polypeptide: Dynein light chain Tctex-type protein 2B (142 aa).

Belongs to the dynein light chain Tctex-type family. In terms of assembly, light chain of the cytoplasmic dynein complex 2, a multisubunit complex composed at least of eleven different proteins. The cytoplasmic dynein 2 complex consists of two catalytic heavy chains (HCs) and a number of non-catalytic subunits presented by intermediate chains (ICs), light intermediate chains (LICs) and light chains (LCs). Among them, a heavy chain (DYNC2H1), two intermediate chains (DYNC2I2 and DYNC2I1), a light intermediate chain (DYNC2LI1), and a light chain (DYNLT2B) are unique to the dynein-2 complex, but a subset of the light chains are also shared by dynein-1 and dynein-2 complexes. Interacts with DYNC2I1. The dimer DYNLT2B-DYNLT1/DYNLT3 interacts with DYNC2I1; this interaction is crucial for retrograde trafficking of ciliary proteins.

Its subcellular location is the dynein axonemal particle. Acts as one of several non-catalytic accessory components of the cytoplasmic dynein 2 complex (dynein-2 complex), a motor protein complex that drives the movement of cargos along microtubules within cilia and flagella in concert with the intraflagellar transport (IFT) system. Required for proper retrograde ciliary transport. The chain is Dynein light chain Tctex-type protein 2B from Homo sapiens (Human).